The chain runs to 384 residues: 4-hydroxy-3-methylbut-2-en-1-yl diphosphate synthase (flavodoxin) 1 (384 aa).

[4Fe-4S] cluster contacts are provided by cysteine 281, cysteine 284, cysteine 316, and glutamate 323.

Belongs to the IspG family. Requires [4Fe-4S] cluster as cofactor.

It catalyses the reaction (2E)-4-hydroxy-3-methylbut-2-enyl diphosphate + oxidized [flavodoxin] + H2O + 2 H(+) = 2-C-methyl-D-erythritol 2,4-cyclic diphosphate + reduced [flavodoxin]. It functions in the pathway isoprenoid biosynthesis; isopentenyl diphosphate biosynthesis via DXP pathway; isopentenyl diphosphate from 1-deoxy-D-xylulose 5-phosphate: step 5/6. In terms of biological role, converts 2C-methyl-D-erythritol 2,4-cyclodiphosphate (ME-2,4cPP) into 1-hydroxy-2-methyl-2-(E)-butenyl 4-diphosphate. This is 4-hydroxy-3-methylbut-2-en-1-yl diphosphate synthase (flavodoxin) 1 from Streptomyces coelicolor (strain ATCC BAA-471 / A3(2) / M145).